A 99-amino-acid chain; its full sequence is Small ribosomal subunit protein bS20 (99 aa).

This sequence belongs to the bacterial ribosomal protein bS20 family.

In terms of biological role, binds directly to 16S ribosomal RNA. This Picosynechococcus sp. (strain ATCC 27264 / PCC 7002 / PR-6) (Agmenellum quadruplicatum) protein is Small ribosomal subunit protein bS20.